Reading from the N-terminus, the 102-residue chain is Large ribosomal subunit protein bL21 (102 aa).

This sequence belongs to the bacterial ribosomal protein bL21 family. In terms of assembly, part of the 50S ribosomal subunit. Contacts protein L20.

This protein binds to 23S rRNA in the presence of protein L20. This is Large ribosomal subunit protein bL21 from Clavibacter sepedonicus (Clavibacter michiganensis subsp. sepedonicus).